A 440-amino-acid polypeptide reads, in one-letter code: Trigger factor (440 aa).

The PPIase FKBP-type domain occupies 163 to 248 (GMVLTVDFSF…LKEIKKKELP (86 aa)).

The protein belongs to the FKBP-type PPIase family. Tig subfamily.

It localises to the cytoplasm. The enzyme catalyses [protein]-peptidylproline (omega=180) = [protein]-peptidylproline (omega=0). Involved in protein export. Acts as a chaperone by maintaining the newly synthesized protein in an open conformation. Functions as a peptidyl-prolyl cis-trans isomerase. This chain is Trigger factor, found in Trichlorobacter lovleyi (strain ATCC BAA-1151 / DSM 17278 / SZ) (Geobacter lovleyi).